We begin with the raw amino-acid sequence, 530 residues long: Hyccin 2 (530 aa).

Threonine 30 and threonine 306 each carry phosphothreonine. Residues serine 321 and serine 341 each carry the phosphoserine modification. Positions 328-410 (RREGAEGVNG…DSVVRKQYVQ (83 aa)) are disordered. Over residues 353–373 (SGASLSSQPIGTKPSSSSQRG) the composition is skewed to polar residues. Phosphoserine is present on residues serine 430, serine 442, serine 444, and serine 491. The segment at 502–530 (EGKELLSPGAPLTKQSRSPSFNMQLISQV) is disordered. Residues 514-530 (TKQSRSPSFNMQLISQV) show a composition bias toward polar residues.

Belongs to the Hyccin family. As to quaternary structure, component of a phosphatidylinositol 4-kinase (PI4K) complex, composed of PI4KA, EFR3 (EFR3A or EFR3B), TTC7 (TTC7A or TTC7B) and HYCC (HYCC1 or HYCC2).

Its subcellular location is the cytoplasm. It is found in the cytosol. The protein localises to the cell membrane. Functionally, component of a complex required to localize phosphatidylinositol 4-kinase (PI4K) to the plasma membrane. The polypeptide is Hyccin 2 (Homo sapiens (Human)).